A 1038-amino-acid chain; its full sequence is Importin-7 (1038 aa).

Position 1 is an N-acetylmethionine (methionine 1). Positions 22–101 (AERQLNEAHK…RENIVEAIIH (80 aa)) constitute an Importin N-terminal domain. The segment at 881–910 (EHENDSDDDEDAEDDDETEELGSDEDDIDE) is disordered. Residues 884-910 (NDSDDDEDAEDDDETEELGSDEDDIDE) show a composition bias toward acidic residues. Serine 886 is modified (phosphoserine). A Phosphothreonine modification is found at threonine 898. Phosphoserine occurs at positions 903 and 1020.

This sequence belongs to the importin beta family. In terms of assembly, forms a heterodimer with KPNB1. Interacts with histone H1. Interacts with H2A, H2B, H3 and H4 histones. Interacts with SNUPN and XPO1. Interacts with RPS7 and RPL5. Interacts with RPL23A (via BIB domain). Binds directly to nuclear pore complexes. Interacts with SMAD4 and NUP93; translocates SMAD4 to the nucleus through the NPC upon BMP7 stimulation resulting in activation of SMAD4 signaling. Interacts with phosphorylated SMAD2; the interaction facilitates translocation of SMAD2 to the nucleus. Interacts with SRP19. Interacts with RUNX2; the interaction inhibits RUNX2 nuclear translocation in osteoblasts. Interacts with HDAC6, DLX3 and KLF4; the interaction facilitates HDAC6, DLX3 and KLF4 nuclear translocation in dental papilla cells.

Its subcellular location is the cytoplasm. It localises to the nucleus. In terms of biological role, functions in nuclear protein import, either by acting as autonomous nuclear transport receptor or as an adapter-like protein in association with the importin-beta subunit KPNB1. Acting autonomously is thought to serve itself as receptor for nuclear localization signals (NLS) and to promote translocation of import substrates through the nuclear pore complex (NPC) by an energy requiring, Ran-dependent mechanism. At the nucleoplasmic side of the NPC, Ran binds to importin, the importin/substrate complex dissociates and importin is re-exported from the nucleus to the cytoplasm where GTP hydrolysis releases Ran. Mediates autonomously the nuclear import of ribosomal proteins RPL23A, RPS7 and RPL5. In association with KPNB1 mediates the nuclear import of H1 histone and the Ran-binding site of IPO7 is not required but synergizes with that of KPNB1 in importin/substrate complex dissociation. Promotes odontoblast differentiation via promoting nuclear translocation of DLX3, KLF4, SMAD2, thereby facilitating the transcription of target genes that play a role in odontoblast differentiation. Facilitates BMP4-induced translocation of SMAD1 to the nucleus and recruitment to the MSX1 gene promoter, thereby promotes the expression of the odontogenic regulator MSX1 in dental mesenchymal cells. Also promotes odontoblast differentiation by facilitating the nuclear translocation of HDAC6 and subsequent repression of RUNX2 expression. Inhibits osteoblast differentiation by inhibiting nuclear translocation of RUNX2 and therefore inhibition of RUNX2 target gene transcription. In vitro, mediates nuclear import of H2A, H2B, H3 and H4 histones. This Mus musculus (Mouse) protein is Importin-7 (Ipo7).